Here is a 279-residue protein sequence, read N- to C-terminus: GATA transcription factor 15 (279 aa).

Positions 52-94 (AYDDHSTVTTSPSSPSSSSTGSVDCTLSLGTPSSRRAEPVAAA) are disordered. A compositionally biased stretch (low complexity) spans 58-74 (TVTTSPSSPSSSSTGSV). A GATA-type zinc finger spans residues 154–179 (CANCGTASTPLWRNGPRGPKSLCNAC).

Belongs to the type IV zinc-finger family. Class B subfamily. Highly expressed in inflorescences. Expressed in vascular bundles of root stele within the elongation zones, of elongating upper internodes and of the junctions of leaf blades and sheaths.

In terms of biological role, probable transcription factor that regulates organogenesis during transition from the vegetative to the reproductive phase. Regulates the expression of CYP78A11/PLA1, HD3A and MADS1 during reproductive development in rice. May act upstream of CYP78A11/PLA1 during panicle development. Acts independently of the photoperiodic and gibberellin signaling pathways. This chain is GATA transcription factor 15, found in Oryza sativa subsp. japonica (Rice).